Here is a 135-residue protein sequence, read N- to C-terminus: Large ribosomal subunit protein uL16m (135 aa).

This sequence belongs to the universal ribosomal protein uL16 family.

It is found in the mitochondrion. This Marchantia polymorpha (Common liverwort) protein is Large ribosomal subunit protein uL16m (RPL16).